A 38-amino-acid chain; its full sequence is Augerpeptide hhe53 (38 aa).

In terms of processing, contains 2 disulfide bonds. In terms of tissue distribution, expressed by the venom duct.

The protein resides in the secreted. The protein is Augerpeptide hhe53 of Hastula hectica (Sea snail).